Here is a 2639-residue protein sequence, read N- to C-terminus: MDGRDFAPPPHLLSERGSLGHRSAAAAARLAPAGPAAQPPAHFQPGKYFPSPLPMASHTASSRLMGSSPASSFMGSFLTSSLGSAASTHPSGPSSSPPEQAYRGSHPTTSQIWFSHSHEAPGYPRFSGSLASTFLPVSHLDHHGNSNVLYGQHRFYGTQKDNFYLRNLPPQPTLLPANHNFPSVARAAPAHPMGSCSRDRDRGEAGSLQKGPKDFDRFLVGKELGREKAGKAAEGKERPAAEEDGGKERHKLVLPVPADGHCREGGPAPRGACEGRPKHLTSCLLNTKVLNGEMGRAALASCAGGMLGRPGTGVVTSGRCAKEAAGPPEPGPAFSECLERRQMLHHTASYAGPPPPLSTAAGSFPCLQLHGGPDGLCPLQDKAPRDLKASGPTFVPSVGHLADKGRPFQAAEACAVAGEGKDRHLEGTMAPDHAAPYGVSYAHLKAEGKGERRPGGFEAALNPRLKGLDYLSSAGPEASFPGLPKSGLDKSGYFELPTSSQDCARPGHQDPLGGKAPQACCTLDKTVGKEAPAGPPGAQKVARIRHQQHLMAAEVEQGGIGAEAKRKSLELASLGYSGPHLPPWGVQAGQGTAMAISEERKAGAYLDPFGSGLQQAALLPQELPAPPDEVSAMKNLLKYSSQALVVGQKAPLVGLGGLKASCIQQEAKFLSSKGPGQSERPDCARSREHDTTHGDGEVRQPPVGIAVALARQKDTVSRSEAAYGTNTARQGRAAPAFKGGGGPRSTHALDLEAEEERTRLCDDRLGLASRELLLQDSKDRVEFARIHPPSSCPGDLAPHLMMQSGQLGGDPAPHTHPHPPWLPRTRSPSLWMGGHSYGLGHPALHQNLPPGFPASVAGPVPSVFPLPQDAPTQLVILPSEPTPHSAPHALADVMDQASLWPPMYGGRGPASHMQHPGQLPVYSRPQLLRQQELYALQQQRAAQFQRKPEDQHLDLEEPAQEKAPKSTHKPVALTPTAPGAPSPAAGPTKLPPCCHPPDPKPPASSPTPPPRPSAPCTLNVCPASSPGPGSRVRSAEEKNGEGQQSTADIITSEPVARAHSVAHAGLEFLASNDPSTSASQSFGITDLPPGYLRPMAGLGFSLPSDVHSSNLEDPETMQTTAPGAQPEPTRTFLPGEPPPCSPRSLEEPGLLSGAREATQDLAATPYPTERGPQGKAADPSPLEGLQELQCAALLEAGGPEATGQAHSTQGGAREERSREEGEQGPSSGASSQVLEQRAGSPGALEDEGEQPAPEEDELEEDELGQQSMEDSEEDCGGAPDNSHPPRALPGLDALVAATINLGDLPSDSPPDPQPPAASGPPSTVPLPHSSGIHGIALLSELADLAIQRQRSERTVPEEEEDVLAFNLQHLATLATAWSLVEAAGLDSSTAPAQPPTANPCSGPRLTPRMQILQRKDTWTPKTKPVCPLKAAIDRLDTQEVGMRVRLAELQRRYKEKQRELARLQRKHDHERDESSRSPARRGPGRPRKRKHSSSLPAPRPTGPLPRSDGKKVKAVRTSLGLLCAELRGGSGGEPAKKRSKLERSVYAGLQTASVEKAQCKKSSCQGGLAPSVAHRVAQLKPKVKSKGLPTGLSSFQQKEATPGGRIREKLSRAKSAKVSGATRHPQPKGHGSRETPRCPAQPSVAASQEAGSGYDSEDCEGLLGTEAPPREAGLLLHTGASVAVLGPSPSSVVKMEANQKAKKKKERQGLLGACRLSSPESEVKIKRRSVKAKVGTTLERAPGQRPPGALGKKKAKGKAKGSLRAEPGATPSRDALFNPSRAFACREEGSQLASERLKRATRKGTVLQPVLRRKNGALSITLATRNAKAILGKGRKLSKVKHKAGKQGKGRAVSRLLESFAVEEDFEFDDNSSFSEEEEDEEEEEEDSGPLSAEQSAALARSCAIHKEDLRDGLPVLIPKEDSLLYAGSVRTLQPPDIYSIVIEGERGNRQRIYSLEQLLQEAVLDVRPQSSRYLPPGTRVCAYWSQKSRCLYPGNVVRGASGDEDEDLDSVVVEFDDGDTGHIAVSNVRLLPPDFKIQCTEPSPALLVSSSCRRTKKVSSEAPPPSEAATPSLSPKAQDGPEALKTPGKKSISKDKAGKAELLTSGAKSPTGASDHFLGRRGSPLLSWSAVAQTKRKAVAAASKGPGVLQNLFQLNGSSKKLRAREALFPVHSVATPIFGNGFRADSFSSLASSYAPFVGGTGPGLPRGAHKLLRAKKAERVEAEKGGRRRAGGEFLVKLDHEGVTSPKNKTCKALLMGDKDFSPKLGRPLPSPSYVHPALVGKDKKGRAPIPPLPMGLALRKYAGQAEFPLPYDSDCHSSFSDEDEDGPGLAAGVPSRFLARLSVSSSSSGSSTSSSSGSVSTSSLCSSDNEDSSYSSDDEDPALLLQTCLTHPVPTLLAQPEALRSKGSGPHAHAQRCFLSRATVAGTGAGSGPSSSSKSKLKRKEALSFSKAKELSRRQRPPSVENRPKISAFLPARQLWKWSGNPTQRRGMKGKARKLFYKAIVRGEETLRVGDCAVFLSAGRPNLPYIGRIESMWESWGSNMVVKVKWFYHPEETKLGKRQCDGKNALYQSCHEDENDVQTISHKCQVVAREQYEQMARSRKCQDRQDLYYLAGTYDPTTGRLVTADGVPILC.

Disordered stretches follow at residues 23–49 (SAAA…GKYF), 84–107 (SAAS…GSHP), 188–249 (APAH…GKER), 669–702 (FLSS…RQPP), 716–746 (VSRS…PRST), 939–1047 (QRAA…QSTA), 1104–1331 (SDVH…HSSG), 1457–1513 (QREL…KKVK), 1582–1666 (KVKS…LGTE), 1722–1776 (EVKI…RDAL), 1868–1893 (FDDN…PLSA), and 2057–2119 (KKVS…DHFL). Low complexity-rich tracts occupy residues 24-41 (AAAA…QPPA) and 84-98 (SAAS…SSPP). Basic and acidic residues-rich tracts occupy residues 211–247 (GPKD…DGGK) and 679–698 (ERPD…DGEV). The residue at position 222 (Lys-222) is an N6-acetyllysine. Positions 946 to 964 (RKPEDQHLDLEEPAQEKAP) are enriched in basic and acidic residues. Positions 972–988 (ALTPTAPGAPSPAAGPT) are enriched in low complexity. The span at 989–1013 (KLPPCCHPPDPKPPASSPTPPPRPS) shows a compositional bias: pro residues. The segment covering 1106-1122 (VHSSNLEDPETMQTTAP) has biased composition (polar residues). Low complexity predominate over residues 1182–1198 (LEGLQELQCAALLEAGG). Over residues 1212–1221 (AREERSREEG) the composition is skewed to basic and acidic residues. Residues 1244–1275 (LEDEGEQPAPEEDELEEDELGQQSMEDSEEDC) show a composition bias toward acidic residues. A compositionally biased stretch (pro residues) spans 1307–1324 (DSPPDPQPPAASGPPSTV). Residues 1439–1473 (EVGMRVRLAELQRRYKEKQRELARLQRKHDHERDE) adopt a coiled-coil conformation. Residues 1457–1475 (QRELARLQRKHDHERDESS) show a composition bias toward basic and acidic residues. A compositionally biased stretch (basic residues) spans 1478–1492 (PARRGPGRPRKRKHS). The span at 1751–1761 (GKKKAKGKAKG) shows a compositional bias: basic residues. Over residues 1868 to 1888 (FDDNSSFSEEEEDEEEEEEDS) the composition is skewed to acidic residues. Residue Ser-2274 is modified to Phosphoserine. Disordered stretches follow at residues 2317 to 2336 (SDCH…LAAG), 2348 to 2383 (SSSS…SDDE), and 2432 to 2472 (GAGS…ENRP). The span at 2348–2371 (SSSSSGSSTSSSSGSVSTSSLCSS) shows a compositional bias: low complexity. Residues 2372 to 2383 (DNEDSSYSSDDE) show a composition bias toward acidic residues. A compositionally biased stretch (low complexity) spans 2432-2442 (GAGSGPSSSSK). The 121-residue stretch at 2513–2633 (ETLRVGDCAV…PTTGRLVTAD (121 aa)) folds into the BAH domain.

The sequence is that of BAH and coiled-coil domain-containing protein 1 from Homo sapiens (Human).